We begin with the raw amino-acid sequence, 44 residues long: Mu-conotoxin-like Cal 12.1.2h (44 aa).

Disulfide bonds link Cys3/Cys16, Cys11/Cys28, Cys18/Cys33, and Cys27/Cys38. Trp17 carries the post-translational modification 6'-bromotryptophan. Pro23 is modified (4-hydroxyproline). 2 positions are modified to 6'-bromotryptophan: Trp36 and Trp37. Pro39 bears the 4-hydroxyproline mark. Trp43 is modified (6'-bromotryptophan).

In terms of tissue distribution, expressed by the venom duct.

It localises to the secreted. In terms of biological role, mu-conotoxins block voltage-gated sodium channels. This toxin reversibly blocks voltage-gated sodium channel in cephalopods, with no alteration in the voltage dependence of sodium conductance or on the kinetics of inactivation. The sequence is that of Mu-conotoxin-like Cal 12.1.2h from Californiconus californicus (California cone).